Reading from the N-terminus, the 565-residue chain is NAD-dependent malic enzyme (565 aa).

Y104 (proton donor) is an active-site residue. R157 is an NAD(+) binding site. The active-site Proton acceptor is the K175. 3 residues coordinate a divalent metal cation: E246, D247, and D270. D270 and N418 together coordinate NAD(+).

This sequence belongs to the malic enzymes family. As to quaternary structure, homotetramer. The cofactor is Mg(2+). Requires Mn(2+) as cofactor.

It catalyses the reaction (S)-malate + NAD(+) = pyruvate + CO2 + NADH. It carries out the reaction oxaloacetate + H(+) = pyruvate + CO2. The polypeptide is NAD-dependent malic enzyme (Serratia proteamaculans (strain 568)).